The chain runs to 122 residues: Small ribosomal subunit protein uS13 (122 aa).

The disordered stretch occupies residues 99-122; sequence RGQRTHTNARTRKGPAKAIAGKKK.

This sequence belongs to the universal ribosomal protein uS13 family. Part of the 30S ribosomal subunit. Forms a loose heterodimer with protein S19. Forms two bridges to the 50S subunit in the 70S ribosome.

Located at the top of the head of the 30S subunit, it contacts several helices of the 16S rRNA. In the 70S ribosome it contacts the 23S rRNA (bridge B1a) and protein L5 of the 50S subunit (bridge B1b), connecting the 2 subunits; these bridges are implicated in subunit movement. Contacts the tRNAs in the A and P-sites. The polypeptide is Small ribosomal subunit protein uS13 (Rhodopseudomonas palustris (strain HaA2)).